The following is a 178-amino-acid chain: uncharacterized protein (178 aa).

4 helical membrane passes run 3 to 23 (IPII…FISI), 56 to 76 (IFLM…NLIF), 101 to 121 (LILP…VAGF), and 150 to 170 (LSLI…YITP).

This sequence to M.jannaschii MJ0706 and Synechocystis PCC 6803 slr1478.

It is found in the cell membrane. This is an uncharacterized protein from Methanocaldococcus jannaschii (strain ATCC 43067 / DSM 2661 / JAL-1 / JCM 10045 / NBRC 100440) (Methanococcus jannaschii).